We begin with the raw amino-acid sequence, 215 residues long: Pyrrolidone-carboxylate peptidase (215 aa).

Active-site residues include glutamate 80, cysteine 143, and histidine 167.

This sequence belongs to the peptidase C15 family. In terms of assembly, homotetramer.

Its subcellular location is the cytoplasm. It catalyses the reaction Release of an N-terminal pyroglutamyl group from a polypeptide, the second amino acid generally not being Pro.. Its function is as follows. Removes 5-oxoproline from various penultimate amino acid residues except L-proline. The sequence is that of Pyrrolidone-carboxylate peptidase from Pectobacterium carotovorum subsp. carotovorum (strain PC1).